A 335-amino-acid chain; its full sequence is MFVDQITLELRAGKGGNGVVAWRKEKYLPKGGPYGGNGGNGGSILIETVTNMYSFEEYRNLRFLKADDGQAGASNNRTGRNGKDLVLKVPEGTLLRDAATGELIHDFTKDGERIVVCQGGRGGKGNVFFKTSTNRAPTKATPGKPGEIRLVELELKLIADIGLVGFPNAGKSTLFNTLARTEVKVGAYPFTTLHPSLGLVHQEGMLYQKTWIMADIPGIIEGASQNRGLGLDFLRHIERTRLLLFVIDISGIERHSPEQDLKILMGELLAYKEELKDKDMVIALNKIDQLLPDEREERVALLKQQFPDQEFILLSGLTGEGVDALYDLFKSKLSE.

The Obg domain maps to 1–158 (MFVDQITLEL…RLVELELKLI (158 aa)). Residues 159-334 (ADIGLVGFPN…LYDLFKSKLS (176 aa)) enclose the OBG-type G domain. Residues 165–172 (GFPNAGKS), 190–194 (FTTLH), 215–218 (DIPG), 285–288 (NKID), and 315–317 (SGL) contribute to the GTP site. Serine 172 and threonine 192 together coordinate Mg(2+).

It belongs to the TRAFAC class OBG-HflX-like GTPase superfamily. OBG GTPase family. Monomer. It depends on Mg(2+) as a cofactor.

The protein resides in the cytoplasm. Functionally, an essential GTPase which binds GTP, GDP and possibly (p)ppGpp with moderate affinity, with high nucleotide exchange rates and a fairly low GTP hydrolysis rate. Plays a role in control of the cell cycle, stress response, ribosome biogenesis and in those bacteria that undergo differentiation, in morphogenesis control. The polypeptide is GTPase Obg (Chlamydia trachomatis serovar L2 (strain ATCC VR-902B / DSM 19102 / 434/Bu)).